A 337-amino-acid polypeptide reads, in one-letter code: Ornithine carbamoyltransferase (337 aa).

Carbamoyl phosphate contacts are provided by residues 57–60 (STRT), Gln-84, Arg-108, and 135–138 (HPTQ). Residues Asn-167, Asp-231, and 235–236 (SM) each bind L-ornithine. Residues 272-273 (CL) and Arg-317 contribute to the carbamoyl phosphate site.

The protein belongs to the aspartate/ornithine carbamoyltransferase superfamily. OTCase family.

Its subcellular location is the cytoplasm. The catalysed reaction is carbamoyl phosphate + L-ornithine = L-citrulline + phosphate + H(+). It functions in the pathway amino-acid degradation; L-arginine degradation via ADI pathway; carbamoyl phosphate from L-arginine: step 2/2. Its function is as follows. Reversibly catalyzes the transfer of the carbamoyl group from carbamoyl phosphate (CP) to the N(epsilon) atom of ornithine (ORN) to produce L-citrulline. In Streptococcus equi subsp. equi (strain 4047), this protein is Ornithine carbamoyltransferase.